Reading from the N-terminus, the 116-residue chain is Somatostatin (116 aa).

The N-terminal stretch at 1 to 24 is a signal peptide; it reads MLSCRLQCALAALSIVLALGCVTG. The propeptide occupies 25–88; it reads APSDPRLRQF…QDEMRLELQR (64 aa). At Ala43 the chain carries Alanine amide. Residues 62-82 are disordered; the sequence is QTENDALEPEDLSQAAEQDEM. Cys105 and Cys116 form a disulfide bridge.

Belongs to the somatostatin family. C-terminal amidation of the neuronostatin peptide is required for its biological activity, including for the regulation of mean arterial pressure.

The protein localises to the secreted. Functionally, inhibits the secretion of pituitary hormones, including that of growth hormone/somatotropin (GH1), PRL, ACTH, luteinizing hormone (LH) and TSH. Also impairs ghrelin- and GnRH-stimulated secretion of GH1 and LH; the inhibition of ghrelin-stimulated secretion of GH1 can be further increased by neuronostatin. Its function is as follows. May enhance low-glucose-induced glucagon release by pancreatic alpha cells. This effect may be mediated by binding to GPR107 and PKA activation. May regulate cardiac contractile function. May compromise cardiomyocyte viability. In the central nervous system, may impair memory retention and may affect hippocampal excitability. May also have anxiolytic and anorexigenic effects. May play a role in arterial pressure regulation. May inhibit basal, but not ghrelin- or GnRH-stimulated secretion of GH1 or LH, but does not affect the release of other pituitary hormones, including PRL, ACTH, FSH or TSH. Potentiates inhibitory action of somatostatin on ghrelin-stimulated secretion of GH1, but not that on GnRH-stimulated secretion of LH. This Homo sapiens (Human) protein is Somatostatin (SST).